The primary structure comprises 348 residues: D-alanine--D-alanine ligase (348 aa).

The region spanning 132–334 (KRVLESAGIP…YSDLIEELVS (203 aa)) is the ATP-grasp domain. 162-217 (LETLSFPIFVKPANMGSSVGISKAESIEGLREAIALALKYDSRILIEQGVVAREIE) is an ATP binding site. Positions 288, 301, and 303 each coordinate Mg(2+).

This sequence belongs to the D-alanine--D-alanine ligase family. It depends on Mg(2+) as a cofactor. The cofactor is Mn(2+).

The protein resides in the cytoplasm. It catalyses the reaction 2 D-alanine + ATP = D-alanyl-D-alanine + ADP + phosphate + H(+). It functions in the pathway cell wall biogenesis; peptidoglycan biosynthesis. Its function is as follows. Cell wall formation. The sequence is that of D-alanine--D-alanine ligase from Streptococcus uberis (strain ATCC BAA-854 / 0140J).